Reading from the N-terminus, the 293-residue chain is Protease HtpX homolog (293 aa).

2 helical membrane passes run 7–26 (ASLL…ALLG) and 30–49 (GMVM…WYYS). Histidine 131 serves as a coordination point for Zn(2+). Glutamate 132 is a catalytic residue. A Zn(2+)-binding site is contributed by histidine 135. 2 consecutive transmembrane segments (helical) span residues 148–168 (ATLA…FWFF) and 180–200 (IGAL…QLGI). Residue glutamate 205 participates in Zn(2+) binding.

This sequence belongs to the peptidase M48B family. The cofactor is Zn(2+).

Its subcellular location is the cell inner membrane. This is Protease HtpX homolog from Acaryochloris marina (strain MBIC 11017).